Reading from the N-terminus, the 760-residue chain is General transcription and DNA repair factor IIH helicase subunit XPD (760 aa).

The Helicase ATP-binding domain maps to 7–283; that stretch reads GLLVYFPYDY…KETDEQRLRD (277 aa). 42 to 49 serves as a coordination point for ATP; the sequence is MPSGTGKT. [4Fe-4S] cluster is bound by residues Cys-116, Cys-134, Cys-155, and Cys-190. Positions 234-237 match the DEAH box motif; the sequence is DEAH. The segment at 438–637 is mediates interaction with MMS19; that stretch reads MDASLAIKPV…TQSRILKARL (200 aa). Residues 682-695 carry the Nuclear localization signal motif; that stretch reads KRFARADKRGKLPR.

The protein belongs to the helicase family. RAD3/XPD subfamily. Component of the 7-subunit TFIIH core complex composed of XPB/ERCC3, XPD/ERCC2, GTF2H1, GTF2H2, GTF2H3, GTF2H4 and GTF2H5, which is active in NER. The core complex associates with the 3-subunit CDK-activating kinase (CAK) module composed of CCNH/cyclin H, CDK7 and MNAT1 to form the 10-subunit holoenzyme (holo-TFIIH) active in transcription. The interaction with GTF2H2 results in the stimulation of the 5'--&gt;3' helicase activity. Component of the MMXD complex, which includes CIAO1, ERCC2, CIAO2B, MMS19 and SLC25A5. Interacts with CIAO1 and CIAO2B; the interaction WITH CIAO2B is direct. Interacts with ATF7IP. Interacts directly with MMS19. Part of TBP-based Pol II pre-initiation complex (PIC), in which Pol II core assembles with general transcription factors and other specific initiation factors including GTF2E1, GTF2E2, GTF2F1, GTF2F2, TCEA1, ERCC2, ERCC3, GTF2H2, GTF2H3, GTF2H4, GTF2H5, GTF2A1, GTF2A2, GTF2B and TBP; this large multi-subunit PIC complex mediates DNA unwinding and targets Pol II core to the transcription start site where the first phosphodiester bond forms. Requires Mg(2+) as cofactor. [4Fe-4S] cluster is required as a cofactor. Post-translationally, ISGylated.

It localises to the nucleus. It is found in the cytoplasm. Its subcellular location is the cytoskeleton. The protein resides in the spindle. It catalyses the reaction Couples ATP hydrolysis with the unwinding of duplex DNA at the replication fork by translocating in the 5'-3' direction. This creates two antiparallel DNA single strands (ssDNA). The leading ssDNA polymer is the template for DNA polymerase III holoenzyme which synthesizes a continuous strand.. The catalysed reaction is ATP + H2O = ADP + phosphate + H(+). ATP-dependent 5'-3' DNA helicase. Component of the general transcription and DNA repair factor IIH (TFIIH) core complex which is involved in general and transcription-coupled nucleotide excision repair (NER) of damaged DNA. When complexed to CDK-activating kinase (CAK), involved in transcription by RNA polymerase II. In NER, TFIIH acts by opening DNA around the lesion to allow the excision of the damaged oligonucleotide and its replacement by a new DNA fragment. The ATP-dependent helicase activity of XPD/ERCC2 is required for DNA opening. In transcription, TFIIH has an essential role in transcription initiation. When the pre-initiation complex (PIC) has been established, TFIIH is required for promoter opening and promoter escape. Phosphorylation of the C-terminal tail (CTD) of the largest subunit of RNA polymerase II by the kinase module CAK controls the initiation of transcription. XPD/ERCC2 acts by forming a bridge between CAK and the core-TFIIH complex. Involved in the regulation of vitamin-D receptor activity. As part of the mitotic spindle-associated MMXD complex it plays a role in chromosome segregation. Might have a role in aging process and could play a causative role in the generation of skin cancers. This Cricetulus griseus (Chinese hamster) protein is General transcription and DNA repair factor IIH helicase subunit XPD.